Reading from the N-terminus, the 150-residue chain is MPSILLLNGPNLNLLGTREPHLYGTTTLNDVETVAKELAASYGAEVECLQSNHEGVLIDRIHEARGKSQAVVINPGAFTHTSVALRDALLGVGLPFIEVHITNVHARESFRHHSYLSDKAAAVIIGLGTFGYQVAVKHALENLVGLEERK.

Tyr23 (proton acceptor) is an active-site residue. The substrate site is built by Asn74, His80, and Asp87. His100 serves as the catalytic Proton donor. Substrate-binding positions include 101 to 102 and Arg111; that span reads IT.

This sequence belongs to the type-II 3-dehydroquinase family. Homododecamer. Adopts a ring-like structure, composed of an arrangement of two hexameric rings stacked on top of one another.

The enzyme catalyses 3-dehydroquinate = 3-dehydroshikimate + H2O. It participates in aromatic compound metabolism; 3,4-dihydroxybenzoate biosynthesis; 3,4-dihydroxybenzoate from 3-dehydroquinate: step 1/2. Functionally, is involved in the catabolism of quinate. Allows the utilization of quinate as carbon source via the beta-ketoadipate pathway. This is Catabolic 3-dehydroquinase 2 from Aspergillus flavus (strain ATCC 200026 / FGSC A1120 / IAM 13836 / NRRL 3357 / JCM 12722 / SRRC 167).